Consider the following 251-residue polypeptide: Ubiquinone/menaquinone biosynthesis C-methyltransferase UbiE (251 aa).

S-adenosyl-L-methionine-binding positions include Thr74, Asp95, and 123-124; that span reads NA.

This sequence belongs to the class I-like SAM-binding methyltransferase superfamily. MenG/UbiE family.

The catalysed reaction is a 2-demethylmenaquinol + S-adenosyl-L-methionine = a menaquinol + S-adenosyl-L-homocysteine + H(+). It carries out the reaction a 2-methoxy-6-(all-trans-polyprenyl)benzene-1,4-diol + S-adenosyl-L-methionine = a 5-methoxy-2-methyl-3-(all-trans-polyprenyl)benzene-1,4-diol + S-adenosyl-L-homocysteine + H(+). It participates in quinol/quinone metabolism; menaquinone biosynthesis; menaquinol from 1,4-dihydroxy-2-naphthoate: step 2/2. It functions in the pathway cofactor biosynthesis; ubiquinone biosynthesis. Its function is as follows. Methyltransferase required for the conversion of demethylmenaquinol (DMKH2) to menaquinol (MKH2) and the conversion of 2-polyprenyl-6-methoxy-1,4-benzoquinol (DDMQH2) to 2-polyprenyl-3-methyl-6-methoxy-1,4-benzoquinol (DMQH2). This chain is Ubiquinone/menaquinone biosynthesis C-methyltransferase UbiE, found in Shewanella baltica (strain OS223).